We begin with the raw amino-acid sequence, 319 residues long: Formimidoylglutamase (319 aa).

Asparagine 127, aspartate 150, histidine 152, aspartate 154, aspartate 242, and aspartate 244 together coordinate Mn(2+).

The protein belongs to the arginase family. Mn(2+) is required as a cofactor.

It catalyses the reaction N-formimidoyl-L-glutamate + H2O = formamide + L-glutamate. It participates in amino-acid degradation; L-histidine degradation into L-glutamate; L-glutamate from N-formimidoyl-L-glutamate (hydrolase route): step 1/1. Catalyzes the conversion of N-formimidoyl-L-glutamate to L-glutamate and formamide. This chain is Formimidoylglutamase, found in Bacillus subtilis (strain 168).